The sequence spans 27 residues: Paragonial peptide PS-1 (27 aa).

Positions 1–17 (DVPSANANANNQRTAAA) are enriched in low complexity. The interval 1 to 27 (DVPSANANANNQRTAAAKPQANAEASS) is disordered.

In terms of tissue distribution, main cells of the accessory glands of males (paragonial gland).

Its subcellular location is the secreted. Functionally, represses female sexual receptivity and stimulates oviposition. This peptide has a low activity. The protein is Paragonial peptide PS-1 (PapC) of Drosophila funebris (Fruit fly).